Reading from the N-terminus, the 52-residue chain is ATP synthase protein 8 (52 aa).

A helical transmembrane segment spans residues 10-30 (FLMSLMIMMILIFMTINFYFF).

This sequence belongs to the ATPase protein 8 family. F-type ATPases have 2 components, CF(1) - the catalytic core - and CF(0) - the membrane proton channel.

The protein resides in the mitochondrion membrane. Mitochondrial membrane ATP synthase (F(1)F(0) ATP synthase or Complex V) produces ATP from ADP in the presence of a proton gradient across the membrane which is generated by electron transport complexes of the respiratory chain. F-type ATPases consist of two structural domains, F(1) - containing the extramembraneous catalytic core and F(0) - containing the membrane proton channel, linked together by a central stalk and a peripheral stalk. During catalysis, ATP synthesis in the catalytic domain of F(1) is coupled via a rotary mechanism of the central stalk subunits to proton translocation. Part of the complex F(0) domain. Minor subunit located with subunit a in the membrane. This chain is ATP synthase protein 8 (MT-ATP8), found in Rhipicephalus sanguineus (Brown dog tick).